Here is a 437-residue protein sequence, read N- to C-terminus: Sonic hedgehog protein (437 aa).

Residues 1 to 24 (MLLLLARCFLVILASSLLVCPGLA) form the signal peptide. Residue Cys-25 is the site of N-palmitoyl cysteine attachment. The short motif at 33-39 (KRRHPKK) is the Cardin-Weintraub element. Glu-90, Glu-91, Asp-96, Thr-126, Glu-127, Asp-130, and Asp-132 together coordinate Ca(2+). Residues His-141, Asp-148, and His-183 each contribute to the Zn(2+) site. The Cholesterol glycine ester moiety is linked to residue Gly-198. Asn-279 carries N-linked (GlcNAc...) asparagine glycosylation.

It belongs to the hedgehog family. In terms of assembly, interacts with HHATL/GUP1 which negatively regulates HHAT-mediated palmitoylation of the SHH N-terminus. Interacts with BOC and CDON. Interacts with HHIP. Interacts with DISP1 via its cholesterol anchor. Interacts with SCUBE2. Interacts with glypican GPC3. As to quaternary structure, multimer. In terms of processing, the C-terminal domain displays an autoproteolysis activity and a cholesterol transferase activity. Both activities result in the cleavage of the full-length protein and covalent attachment of a cholesterol moiety to the C-terminal of the newly generated N-terminal fragment (ShhN). Cholesterylation is required for the sonic hedgehog protein N-product targeting to lipid rafts and multimerization. ShhN is the active species in both local and long-range signaling, whereas the C-product (ShhC) is degraded in the endoplasmic reticulum. Post-translationally, N-palmitoylation by HHAT of ShhN is required for sonic hedgehog protein N-product multimerization and full activity. It is a prerequisite for the membrane-proximal positioning and the subsequent shedding of this N-terminal peptide. The lipidated N- and C-terminal peptides of ShhNp can be cleaved (shedding). The N-terminal palmitoylated peptide is cleaved at the Cardin-Weintraub (CW) motif site. The cleavage reduced the interactions with heparan sulfate. The cleavage is enhanced by SCUBE2. As to expression, expressed in a number of embryonic tissues including the notochord, ventral neural tube, floor plate, lung bud, zone of polarizing activity and posterior distal mesenchyme of limbs. In the adult, expressed in lung and neural retina.

It is found in the endoplasmic reticulum membrane. It localises to the golgi apparatus membrane. Its subcellular location is the cell membrane. It carries out the reaction glycyl-L-cysteinyl-[protein] + cholesterol + H(+) = [protein]-C-terminal glycyl cholesterol ester + N-terminal L-cysteinyl-[protein]. Its function is as follows. The C-terminal part of the sonic hedgehog protein precursor displays an autoproteolysis and a cholesterol transferase activity. Both activities result in the cleavage of the full-length protein into two parts (ShhN and ShhC) followed by the covalent attachment of a cholesterol moiety to the C-terminal of the newly generated ShhN. Both activities occur in the reticulum endoplasmic. Once cleaved, ShhC is degraded in the endoplasmic reticulum. In terms of biological role, the dually lipidated sonic hedgehog protein N-product (ShhNp) is a morphogen which is essential for a variety of patterning events during development. Induces ventral cell fate in the neural tube and somites. Involved in the patterning of the anterior-posterior axis of the developing limb bud. Essential for axon guidance. Binds to the patched (PTCH1) receptor, which functions in association with smoothened (SMO), to activate the transcription of target genes. In the absence of SHH, PTCH1 represses the constitutive signaling activity of SMO. The chain is Sonic hedgehog protein from Mus musculus (Mouse).